The sequence spans 350 residues: MDQKASYFINEKLFTEVKPVLFTDLIHHLKIGPSMAKKLMFDYYKQTTNAKYNCVVICCYKDQTIKIIHDLSNIPQQDSIIDCFIYAFNPMDSFIPYYDIIDQKDCLTIKNSYELKVSESSKIIERTKTLEEKSKPLVRPTARSKTTPEETTGRKSKSKDMGLRSTALLAKMKKDRDDKETSRQNELRKRKEENLQKINKQNPEREAQMKELNNLFVEDDLDTEEVNGGSKPNSPKETDSNDKDKNNDDLEDLLETTAEDSLMDVPKIQQTKPSETEHSKEPKSEEEPSSFIDEDGYIVTKRPATSTPPRKPSPVVKRALSSSKKQETPSSNKRLKKQGTLESFFKRKAK.

The tract at residues 131 to 350 (EEKSKPLVRP…LESFFKRKAK (220 aa)) is disordered. Composition is skewed to basic and acidic residues over residues 146–162 (TTPEETTGRKSKSKDMG) and 172–195 (MKKDRDDKETSRQNELRKRKEENL). Residue Thr223 is modified to Phosphothreonine. Ser230 is modified (phosphoserine). The segment covering 234–248 (SPKETDSNDKDKNND) has biased composition (basic and acidic residues). Positions 249-262 (DLEDLLETTAEDSL) are enriched in acidic residues. Over residues 274-286 (SETEHSKEPKSEE) the composition is skewed to basic and acidic residues. Polar residues predominate over residues 320-332 (LSSSKKQETPSSN).

DNA polymerase delta is a heterotrimer of POL3, POL32 and HYS2. POL32 can form homodimers.

Its subcellular location is the nucleus. DNA polymerase delta (DNA polymerase III) participates in chromosomal DNA replication. It is required during synthesis of the leading and lagging DNA strands at the replication fork and binds at/or near replication origins and moves along DNA with the replication fork. It has 3'-5' proofreading exonuclease activity that correct errors arising during DNA replication. It is also involved in DNA synthesis during DNA repair. This is DNA polymerase delta subunit 3 (POL32) from Saccharomyces cerevisiae (strain ATCC 204508 / S288c) (Baker's yeast).